We begin with the raw amino-acid sequence, 279 residues long: Alcohol dehydrogenase-related 31 kDa protein (279 aa).

Residue Tyr11 to Leu34 participates in NAD(+) binding. Substrate is bound at residue Ser139. The active-site Proton acceptor is Tyr152.

It belongs to the short-chain dehydrogenases/reductases (SDR) family.

The protein is Alcohol dehydrogenase-related 31 kDa protein (Adhr) of Drosophila subobscura (Fruit fly).